A 283-amino-acid polypeptide reads, in one-letter code: NFU1 iron-sulfur cluster scaffold homolog, mitochondrial (283 aa).

A mitochondrion-targeting transit peptide spans 1 to 30 (MSKFLSQAALNTLRNTRLGSRQLVRSFAGI). Residues 182 to 250 (IKELLDTRIR…IPEVESVEQV (69 aa)) are nifU. [4Fe-4S] cluster-binding residues include C219 and C222.

Belongs to the NifU family.

The protein localises to the mitochondrion. Functionally, molecular scaffold for [Fe-S] cluster assembly of mitochondrial iron-sulfur proteins. This Drosophila yakuba (Fruit fly) protein is NFU1 iron-sulfur cluster scaffold homolog, mitochondrial.